Reading from the N-terminus, the 84-residue chain is Small ribosomal subunit protein bS20 (84 aa).

Residues Met1–Met25 are disordered.

It belongs to the bacterial ribosomal protein bS20 family.

Its function is as follows. Binds directly to 16S ribosomal RNA. The chain is Small ribosomal subunit protein bS20 from Ureaplasma urealyticum serovar 10 (strain ATCC 33699 / Western).